Consider the following 401-residue polypeptide: Voltage-gated potassium channel subunit beta-1 (401 aa).

T90, W91, Q97, and D119 together coordinate NADP(+). Y124 functions as the Proton donor/acceptor in the catalytic mechanism. NADP(+)-binding residues include N192, S222, R223, Q248, W277, S278, P279, L280, A281, C282, K288, R298, G357, S359, Q363, E366, and N367.

Belongs to the shaker potassium channel beta subunit family. Homotetramer. Interaction with tetrameric potassium channel alpha subunits gives rise to a heterooctamer. Identified in potassium channel complexes containing KCNA1, KCNA2, KCNA4, KCNA5, KCNA6, KCNAB1 and KCNAB2. Part of a complex containing KCNA1, KCNA4 and LGI1; interaction with LGI1 inhibits down-regulation of KCNA1 channel activity. Interacts with the dimer formed by GNB1 and GNG2; this enhances KCNA1 binding. Interacts with SQSTM1.

The protein resides in the cytoplasm. Its subcellular location is the membrane. It is found in the cell membrane. The enzyme catalyses a primary alcohol + NADP(+) = an aldehyde + NADPH + H(+). The catalysed reaction is a secondary alcohol + NADP(+) = a ketone + NADPH + H(+). Its function is as follows. Regulatory subunit of the voltage-gated potassium (Kv) channels composed of pore-forming and potassium-conducting alpha subunits and of regulatory beta subunits. The beta-1/KCNAB1 cytoplasmic subunit mediates closure of delayed rectifier potassium channels by physically obstructing the pore via its N-terminal domain and increases the speed of channel closure for other family members. Promotes the inactivation of KCNA1, KCNA2, KCNA4, KCNA5 and KCNA6 alpha subunit-containing channels. Displays nicotinamide adenine dinucleotide phosphate (NADPH)-dependent aldoketoreductase activity by catalyzing the NADPH-dependent reduction of a variety of endogenous aldehydes and ketones. The binding of NADPH is required for efficient down-regulation of potassium channel activity. Oxidation of the bound NADPH restrains N-terminal domain from blocking the channel, thereby decreasing N-type inactivation of potassium channel activity. The protein is Voltage-gated potassium channel subunit beta-1 (KCNAB1) of Bos taurus (Bovine).